Reading from the N-terminus, the 581-residue chain is Dehydrocurvularin exporter (581 aa).

The segment covering 1–10 (MTDSPSLESN) has biased composition (polar residues). The segment at 1-47 (MTDSPSLESNNKSDMDTPRPPASSHDEHDAAESVSEKQDSATTSPTG) is disordered. An N-linked (GlcNAc...) asparagine glycan is attached at Asn-11. Residues 24-39 (SHDEHDAAESVSEKQD) show a composition bias toward basic and acidic residues. 14 helical membrane-spanning segments follow: residues 61–81 (LVMF…GIIA), 96–116 (DVGW…PLWG), 126–146 (WVYL…AAAP), 159–179 (GWGA…VAPP), 184–204 (LLIG…PVIG), 215–235 (WCFW…LLFL), 251–271 (IILN…VCLT), 288–308 (VIAT…VEWL), 330–350 (IFCL…PIYF), 363–383 (VNTL…GGAI), 392–412 (YELA…ILDV), 424–444 (VLFG…VQGF), 456–476 (IMVM…QSLF), and 527–547 (VFAF…LIPF). Residues 552-581 (DHEKKPSKDAMASDEVKASEEVQQEKKVTV) form a disordered region. Over residues 565 to 581 (DEVKASEEVQQEKKVTV) the composition is skewed to basic and acidic residues.

This sequence belongs to the major facilitator superfamily. TCR/Tet family.

It is found in the cell membrane. Efflux pump that is probably involved in the export of dehydrocurvularin. This is Dehydrocurvularin exporter from Alternaria cinerariae.